A 583-amino-acid chain; its full sequence is uncharacterized protein (583 aa).

24–140 is a binding site for a nucleoside 3',5'-cyclic phosphate; it reads ILADIDDEQL…SAMLRAMARM (117 aa). The 161-residue stretch at 309 to 469 folds into the PNPLA domain; it reads LVMAGGGARG…LNNLPANVMC (161 aa). Residues 313–318 carry the GXGXXG motif; it reads GGGARG. The GXSXG signature appears at 340–344; that stretch reads GTSSG. Catalysis depends on S342, which acts as the Nucleophile. D456 functions as the Proton acceptor in the catalytic mechanism. Positions 456 to 458 match the DGA/G motif; the sequence is DGG.

Belongs to the NTE family.

This is an uncharacterized protein from Mycobacterium tuberculosis (strain CDC 1551 / Oshkosh).